The primary structure comprises 432 residues: MSIITDVYAREILDSRGNPTIEVEVYTESGAFGRGMVPSGASTGEYEAVELRDGDKARYGGKGVTKAVDNVNNIIAEAIIGYDVRDQMAIDKAMIALDGTPNKGKLGANAILGVSIAVARAAADYLEVPLYHYLGGFNTKVLPTPMMNIINGGSHADNSIDFQEFMIMPVGAPTFKEALRMGAEVFHALAAILKSRGLATSVGDEGGFAPNLGSNEEGFEVIIEAIEKAGYVPGKDVVLAMDAASSEFYDKEKGVYVLADSGEGEKTTDEMIKFYEELVSKYPIISIEDGLDENDWDGFKKLTDVLGDKVQLVGDDLFVTNTQKLSEGIEKGIANSILIKVNQIGTLTETFEAIEMAKEAGYTAVVSHRSGETEDSTISDIAVATNAGQIKTGSLSRTDRIAKYNQLLRIEDQLGEVAEYKGLKSFYNLKAA.

Glutamine 163 serves as a coordination point for (2R)-2-phosphoglycerate. Glutamate 205 acts as the Proton donor in catalysis. Mg(2+) is bound by residues aspartate 242, glutamate 288, and aspartate 315. (2R)-2-phosphoglycerate is bound by residues lysine 340, arginine 369, serine 370, and lysine 391. Lysine 340 serves as the catalytic Proton acceptor.

The protein belongs to the enolase family. In terms of assembly, homodimer. Mg(2+) serves as cofactor.

It localises to the cytoplasm. The protein resides in the secreted. Its subcellular location is the cell surface. The enzyme catalyses (2R)-2-phosphoglycerate = phosphoenolpyruvate + H2O. It functions in the pathway carbohydrate degradation; glycolysis; pyruvate from D-glyceraldehyde 3-phosphate: step 4/5. With respect to regulation, the covalent binding to the substrate causes inactivation of the enzyme, and possibly serves as a signal for the export of the protein. Functionally, catalyzes the reversible conversion of 2-phosphoglycerate (2-PG) into phosphoenolpyruvate (PEP). It is essential for the degradation of carbohydrates via glycolysis. This chain is Enolase, found in Enterococcus hirae.